The chain runs to 399 residues: Centrosomal protein 43 (399 aa).

Residues 70–102 (DGRLVASLVAEFLQFFNLDFTLAVFQPETSTLQ) enclose the LisH domain. Disordered stretches follow at residues 139–218 (EKGP…SSLH) and 232–308 (NRTL…SESK). At Thr-143 the chain carries Phosphothreonine. A phosphoserine mark is found at Ser-152, Ser-156, and Ser-160. A compositionally biased stretch (polar residues) spans 163-172 (GKTSAQTTPS). The residue at position 170 (Thr-170) is a Phosphothreonine. A compositionally biased stretch (basic residues) spans 175-186 (PRYKGQGKKKTS). Ser-202 is subject to Phosphoserine. Positions 205-218 (SVSLSEPKSKSSLH) are enriched in low complexity. Position 234 is a phosphothreonine (Thr-234). Residues 245 to 256 (PDEDDMEGDSFF) show a composition bias toward acidic residues. Basic and acidic residues predominate over residues 259–275 (PIPKPEKTYGLRKEPRK). A compositionally biased stretch (low complexity) spans 286–302 (APPLKSGLSSLAGAPSL). Residues Ser-301 and Ser-326 each carry the phosphoserine modification. Positions 331–353 (TGEDDDYVDDFNSTSHRSEKSEI) are disordered. Tyr-337 carries the phosphotyrosine modification.

This sequence belongs to the CEP43 family. Homodimer. Part of a ternary complex that contains CEP350, CEP43 and MAPRE1. Interacts directly with CEP350 and MAPRE1. Interacts with CEP19. Interacts (via N-terminus) with CEP350 (via C-terminus). As to expression, ubiquitous. Highly expressed in heart, liver, muscle, kidney, intestine, colon, adrenal gland, prostate, testis, and pancreas.

It localises to the cytoplasm. The protein localises to the cytoskeleton. It is found in the microtubule organizing center. The protein resides in the centrosome. Its subcellular location is the centriole. It localises to the cilium basal body. In terms of biological role, required for anchoring microtubules to the centrosomes. Required for ciliation. The sequence is that of Centrosomal protein 43 from Homo sapiens (Human).